Consider the following 132-residue polypeptide: ATP synthase epsilon chain, chloroplastic (132 aa).

The protein belongs to the ATPase epsilon chain family. As to quaternary structure, F-type ATPases have 2 components, CF(1) - the catalytic core - and CF(0) - the membrane proton channel. CF(1) has five subunits: alpha(3), beta(3), gamma(1), delta(1), epsilon(1). CF(0) has three main subunits: a, b and c.

It is found in the plastid. It localises to the chloroplast thylakoid membrane. Produces ATP from ADP in the presence of a proton gradient across the membrane. The protein is ATP synthase epsilon chain, chloroplastic of Calycanthus floridus var. glaucus (Eastern sweetshrub).